The following is a 144-amino-acid chain: Protein CT_635 (144 aa).

Positions Glu110–Leu144 are disordered. Residues Ser118–Leu144 are compositionally biased toward basic residues.

It belongs to the chlamydial CPn_0742/CT_635/TC_0003 family.

The sequence is that of Protein CT_635 from Chlamydia trachomatis serovar D (strain ATCC VR-885 / DSM 19411 / UW-3/Cx).